The primary structure comprises 445 residues: RING finger and transmembrane domain-containing protein 2 (445 aa).

Over 1 to 183 the chain is Extracellular; it reads MWLLAAHQVL…LLAKLCFQHK (183 aa). The disordered stretch occupies residues 12–41; that stretch reads KMQRRHSSNTDNIPPERSRSQALSPEASVD. Residues 184–203 form a helical membrane-spanning segment; sequence LGIAVCIGMASTFAYANSTL. The Cytoplasmic segment spans residues 204-215; it reads REQVSLKEKRSV. The chain crosses the membrane as a helical span at residues 216–236; that stretch reads LVILWILAFLAGNTMYVLYTF. Residues 237-256 are Extracellular-facing; the sequence is SSQQLYSSLIFLKPNLETLD. A helical membrane pass occupies residues 257–277; it reads FFDLLWIVGIADFVLKYITIA. At 278–330 the chain is on the cytoplasmic side; that stretch reads LKCLIVALPKIILAVKSKGKFYLVIEELSQLFRSLVPIQLWYKYIMGDDSSNS. Residues 331 to 351 traverse the membrane as a helical segment; that stretch reads YFLGGVLIVLYSLCKSFDICG. Over 352-445 the chain is Extracellular; the sequence is RVGGLRKALK…GATSAHLQVY (94 aa). An RING-type zinc finger spans residues 385-423; sequence CAICQAEFRDPMILLCQHVFCEECLCLWLDRERTCPLCR.

The protein localises to the membrane. E3 ubiquitin-protein ligase that negatively regulates IL3-dependent cellular responses through IL3RA ubiquitination and degradation by the proteasome, having an anti-inflammatory effect. The chain is RING finger and transmembrane domain-containing protein 2 (Rnft2) from Mus musculus (Mouse).